A 199-amino-acid polypeptide reads, in one-letter code: Holliday junction branch migration complex subunit RuvA (199 aa).

The segment at 1-65 (MIGWLHGQII…EDALLLYGFL (65 aa)) is domain I. A domain II region spans residues 66-144 (DKEERSLFRS…QFDGSVSDTF (79 aa)). Residues 144 to 148 (FQKQA) form a flexible linker region. Residues 149–199 (GSTHSQQEAISALEALGYKPQEAWKVVNKIDNGNKSCEQLIREALQILSSR) are domain III.

It belongs to the RuvA family. Homotetramer. Forms an RuvA(8)-RuvB(12)-Holliday junction (HJ) complex. HJ DNA is sandwiched between 2 RuvA tetramers; dsDNA enters through RuvA and exits via RuvB. An RuvB hexamer assembles on each DNA strand where it exits the tetramer. Each RuvB hexamer is contacted by two RuvA subunits (via domain III) on 2 adjacent RuvB subunits; this complex drives branch migration. In the full resolvosome a probable DNA-RuvA(4)-RuvB(12)-RuvC(2) complex forms which resolves the HJ.

The protein localises to the cytoplasm. Functionally, the RuvA-RuvB-RuvC complex processes Holliday junction (HJ) DNA during genetic recombination and DNA repair, while the RuvA-RuvB complex plays an important role in the rescue of blocked DNA replication forks via replication fork reversal (RFR). RuvA specifically binds to HJ cruciform DNA, conferring on it an open structure. The RuvB hexamer acts as an ATP-dependent pump, pulling dsDNA into and through the RuvAB complex. HJ branch migration allows RuvC to scan DNA until it finds its consensus sequence, where it cleaves and resolves the cruciform DNA. The chain is Holliday junction branch migration complex subunit RuvA from Legionella pneumophila (strain Paris).